The primary structure comprises 434 residues: Methylenetetrahydrofolate--tRNA-(uracil-5-)-methyltransferase TrmFO (434 aa).

Position 10 to 15 (10 to 15 (GAGLAG)) interacts with FAD.

This sequence belongs to the MnmG family. TrmFO subfamily. It depends on FAD as a cofactor.

The protein localises to the cytoplasm. It catalyses the reaction uridine(54) in tRNA + (6R)-5,10-methylene-5,6,7,8-tetrahydrofolate + NADH + H(+) = 5-methyluridine(54) in tRNA + (6S)-5,6,7,8-tetrahydrofolate + NAD(+). It carries out the reaction uridine(54) in tRNA + (6R)-5,10-methylene-5,6,7,8-tetrahydrofolate + NADPH + H(+) = 5-methyluridine(54) in tRNA + (6S)-5,6,7,8-tetrahydrofolate + NADP(+). Functionally, catalyzes the folate-dependent formation of 5-methyl-uridine at position 54 (M-5-U54) in all tRNAs. This Bacillus cereus (strain ATCC 14579 / DSM 31 / CCUG 7414 / JCM 2152 / NBRC 15305 / NCIMB 9373 / NCTC 2599 / NRRL B-3711) protein is Methylenetetrahydrofolate--tRNA-(uracil-5-)-methyltransferase TrmFO.